Reading from the N-terminus, the 397-residue chain is Acetate kinase (397 aa).

N8 lines the Mg(2+) pocket. K15 serves as a coordination point for ATP. A substrate-binding site is contributed by R89. D146 functions as the Proton donor/acceptor in the catalytic mechanism. Residues 206–210 (HLGNG), 281–283 (DLR), and 329–333 (GIGEN) contribute to the ATP site. E382 lines the Mg(2+) pocket.

The protein belongs to the acetokinase family. As to quaternary structure, homodimer. It depends on Mg(2+) as a cofactor. The cofactor is Mn(2+).

The protein localises to the cytoplasm. It catalyses the reaction acetate + ATP = acetyl phosphate + ADP. It participates in metabolic intermediate biosynthesis; acetyl-CoA biosynthesis; acetyl-CoA from acetate: step 1/2. In terms of biological role, catalyzes the formation of acetyl phosphate from acetate and ATP. Can also catalyze the reverse reaction. The chain is Acetate kinase from Geobacillus sp. (strain WCH70).